A 239-amino-acid polypeptide reads, in one-letter code: Large ribosomal subunit protein uL30 (239 aa).

The interval 1 to 22 is disordered; it reads MEGVMSEAPQSSIRKKEYEARM.

The protein belongs to the universal ribosomal protein uL30 family.

This is Large ribosomal subunit protein uL30 (RPL7) from Encephalitozoon cuniculi (strain GB-M1) (Microsporidian parasite).